Consider the following 146-residue polypeptide: Hemoglobin subunit beta (146 aa).

Position 1 is an N-acetylvaline (Val1). Residues 2-146 enclose the Globin domain; sequence HLTPEEKNAV…VANALAHKYH (145 aa). A Phosphothreonine modification is found at Thr12. Residue Ser44 is modified to Phosphoserine. Lys59 carries the N6-acetyllysine modification. Heme b is bound at residue His63. Lys82 carries the N6-acetyllysine modification. His92 provides a ligand contact to heme b. An S-nitrosocysteine modification is found at Cys93. Lys144 bears the N6-acetyllysine mark.

This sequence belongs to the globin family. In terms of assembly, heterotetramer of two alpha chains and two beta chains. As to expression, red blood cells.

Functionally, involved in oxygen transport from the lung to the various peripheral tissues. In Papio cynocephalus (Yellow baboon), this protein is Hemoglobin subunit beta (HBB).